The following is a 232-amino-acid chain: Large ribosomal subunit protein uL1 (232 aa).

This sequence belongs to the universal ribosomal protein uL1 family. Part of the 50S ribosomal subunit.

Functionally, binds directly to 23S rRNA. The L1 stalk is quite mobile in the ribosome, and is involved in E site tRNA release. In terms of biological role, protein L1 is also a translational repressor protein, it controls the translation of the L11 operon by binding to its mRNA. This is Large ribosomal subunit protein uL1 from Bordetella petrii (strain ATCC BAA-461 / DSM 12804 / CCUG 43448).